The chain runs to 377 residues: Iris (377 aa).

2 N-linked (GlcNAc...) asparagine glycosylation sites follow: Asn-11 and Asn-226.

It belongs to the serpin family. In terms of tissue distribution, female saliva (at protein level). Female salivary gland (at protein level).

The protein localises to the secreted. Its function is as follows. Serine protease inhibitor with anticoagulant and immunosuppressive properties that can modulate blood feeding of ticks on vertebrate species. Strongly inhibits human leukocyte elastase (ELANE) and porcine pancreatic elastase. Moderately inhibits human tPA/tissue-type plasminogen activator (PLAT), coagulation factor Xa (F10), thrombin (F2) and trypsin. Does not inhibit human plasmin (PLG). Inhibits platelet aggregation. Inhibits the intrinsic pathway of blood coagulation in the host. Inhibits fibrinolysis in the host. Inhibits proliferation of mouse splenocytes. Decreases the number of IFN-gamma (IFNG)-producing human peripheral blood mononuclear cells (PBMCs) after stimulation with phytohemagglutinin A (PHA). Increases the number of IL10-producing human PBMCs after stimulation with lipopolysaccharides (LPS) with no significant effect on IL10 production. Inhibits production of IFNG, IL6, TNF-alpha (TNF) and CXCL8 by human PBMCs. Binds to monocyte/macrophage subpopulation of the host PBMCs. Increases both survival rate and survival time in mice with LPS-induced endotoxemic shock. This is Iris from Ixodes ricinus (Common tick).